We begin with the raw amino-acid sequence, 182 residues long: Crossover junction endodeoxyribonuclease RuvC (182 aa).

Catalysis depends on residues aspartate 7, glutamate 69, and aspartate 141. Mg(2+) is bound by residues aspartate 7, glutamate 69, and aspartate 141.

Belongs to the RuvC family. As to quaternary structure, homodimer which binds Holliday junction (HJ) DNA. The HJ becomes 2-fold symmetrical on binding to RuvC with unstacked arms; it has a different conformation from HJ DNA in complex with RuvA. In the full resolvosome a probable DNA-RuvA(4)-RuvB(12)-RuvC(2) complex forms which resolves the HJ. The cofactor is Mg(2+).

The protein resides in the cytoplasm. The catalysed reaction is Endonucleolytic cleavage at a junction such as a reciprocal single-stranded crossover between two homologous DNA duplexes (Holliday junction).. In terms of biological role, the RuvA-RuvB-RuvC complex processes Holliday junction (HJ) DNA during genetic recombination and DNA repair. Endonuclease that resolves HJ intermediates. Cleaves cruciform DNA by making single-stranded nicks across the HJ at symmetrical positions within the homologous arms, yielding a 5'-phosphate and a 3'-hydroxyl group; requires a central core of homology in the junction. The consensus cleavage sequence is 5'-(A/T)TT(C/G)-3'. Cleavage occurs on the 3'-side of the TT dinucleotide at the point of strand exchange. HJ branch migration catalyzed by RuvA-RuvB allows RuvC to scan DNA until it finds its consensus sequence, where it cleaves and resolves the cruciform DNA. The protein is Crossover junction endodeoxyribonuclease RuvC of Paracidovorax citrulli (strain AAC00-1) (Acidovorax citrulli).